The sequence spans 272 residues: MAHYFVGDIQGCYSELQLLLQKVAFNPSKDQLWAVGDLVARGTESLATLRFFQSLQDSAKVVLGNHDLHLLALHGKLKRPHPQDHLDELLNAPDIDNLVNWLRQQPLVRTLPEHNIIMTHAGVPPQWDIAILEHEAEQVSFALQQDDYLSALIAQMYTEDAEHWSPSLHGIDRLRYCINALTRMRFLHLDGRLDFKCKLPPSEQHSTELRPWFEFASKTAPQNTLIFGHWAALMGQTGNPHVVALDTGCCWGEHLTLWHLEKNEIITQKRLI.

It belongs to the Ap4A hydrolase family.

The enzyme catalyses P(1),P(4)-bis(5'-adenosyl) tetraphosphate + H2O = 2 ADP + 2 H(+). Hydrolyzes diadenosine 5',5'''-P1,P4-tetraphosphate to yield ADP. The sequence is that of Bis(5'-nucleosyl)-tetraphosphatase, symmetrical from Shewanella frigidimarina (strain NCIMB 400).